Reading from the N-terminus, the 346-residue chain is Phosphoribosylformylglycinamidine cyclo-ligase (346 aa).

Belongs to the AIR synthase family.

Its subcellular location is the cytoplasm. It catalyses the reaction 2-formamido-N(1)-(5-O-phospho-beta-D-ribosyl)acetamidine + ATP = 5-amino-1-(5-phospho-beta-D-ribosyl)imidazole + ADP + phosphate + H(+). It functions in the pathway purine metabolism; IMP biosynthesis via de novo pathway; 5-amino-1-(5-phospho-D-ribosyl)imidazole from N(2)-formyl-N(1)-(5-phospho-D-ribosyl)glycinamide: step 2/2. This Bacillus cereus (strain B4264) protein is Phosphoribosylformylglycinamidine cyclo-ligase.